The following is a 94-amino-acid chain: Large ribosomal subunit protein bL27 (94 aa).

A propeptide spanning residues 1-9 is cleaved from the precursor; sequence MLKLNLQFF.

Belongs to the bacterial ribosomal protein bL27 family. The N-terminus is cleaved by ribosomal processing cysteine protease Prp.

The polypeptide is Large ribosomal subunit protein bL27 (Staphylococcus epidermidis (strain ATCC 35984 / DSM 28319 / BCRC 17069 / CCUG 31568 / BM 3577 / RP62A)).